Reading from the N-terminus, the 458-residue chain is Bifunctional protein GlmU (458 aa).

Residues 1–230 form a pyrophosphorylase region; the sequence is MLQVDVVILA…DWEVSGVNDK (230 aa). Residues 9–12, K23, Q75, and 80–81 contribute to the UDP-N-acetyl-alpha-D-glucosamine site; these read LAAG and GT. D104 contributes to the Mg(2+) binding site. The UDP-N-acetyl-alpha-D-glucosamine site is built by G139, E155, N170, and N228. Residue N228 participates in Mg(2+) binding. Residues 231-251 form a linker region; the sequence is IQLSILERAHQQDTANRLMEQ. An N-acetyltransferase region spans residues 252–458; the sequence is GVMFADPARF…NWKRPRKDRN (207 aa). UDP-N-acetyl-alpha-D-glucosamine-binding residues include R334 and K352. H364 serves as the catalytic Proton acceptor. Positions 367 and 378 each coordinate UDP-N-acetyl-alpha-D-glucosamine. Acetyl-CoA is bound by residues A381, 387–388, S406, A424, and R441; that span reads NY.

It in the N-terminal section; belongs to the N-acetylglucosamine-1-phosphate uridyltransferase family. This sequence in the C-terminal section; belongs to the transferase hexapeptide repeat family. As to quaternary structure, homotrimer. Mg(2+) serves as cofactor.

Its subcellular location is the cytoplasm. It catalyses the reaction alpha-D-glucosamine 1-phosphate + acetyl-CoA = N-acetyl-alpha-D-glucosamine 1-phosphate + CoA + H(+). The enzyme catalyses N-acetyl-alpha-D-glucosamine 1-phosphate + UTP + H(+) = UDP-N-acetyl-alpha-D-glucosamine + diphosphate. It participates in nucleotide-sugar biosynthesis; UDP-N-acetyl-alpha-D-glucosamine biosynthesis; N-acetyl-alpha-D-glucosamine 1-phosphate from alpha-D-glucosamine 6-phosphate (route II): step 2/2. The protein operates within nucleotide-sugar biosynthesis; UDP-N-acetyl-alpha-D-glucosamine biosynthesis; UDP-N-acetyl-alpha-D-glucosamine from N-acetyl-alpha-D-glucosamine 1-phosphate: step 1/1. It functions in the pathway bacterial outer membrane biogenesis; LPS lipid A biosynthesis. Its function is as follows. Catalyzes the last two sequential reactions in the de novo biosynthetic pathway for UDP-N-acetylglucosamine (UDP-GlcNAc). The C-terminal domain catalyzes the transfer of acetyl group from acetyl coenzyme A to glucosamine-1-phosphate (GlcN-1-P) to produce N-acetylglucosamine-1-phosphate (GlcNAc-1-P), which is converted into UDP-GlcNAc by the transfer of uridine 5-monophosphate (from uridine 5-triphosphate), a reaction catalyzed by the N-terminal domain. The sequence is that of Bifunctional protein GlmU from Nitrosomonas europaea (strain ATCC 19718 / CIP 103999 / KCTC 2705 / NBRC 14298).